The primary structure comprises 530 residues: Transcription factor SPT20 homolog (530 aa).

The residue at position 296 (Ser-296) is a Phosphoserine. The interval 419 to 530 (CPVKMSHSSS…PASSSQRHES (112 aa)) is disordered. Composition is skewed to low complexity over residues 424–436 (SHSS…LNSG) and 466–475 (SSSGNSSSGN). A Phosphothreonine modification is found at Thr-490. Residues 514–530 (LSPAALSPASSSQRHES) are compositionally biased toward low complexity. Residues Ser-515 and Ser-520 each carry the phosphoserine modification.

Belongs to the SPT20 family. In terms of assembly, interacts with ATG9A. Interacts with MAPK14.

Functionally, required for MAP kinase p38 (MAPK11, MAPK12, MAPK13 and/or MAPK14) activation during gastrulation. Required for down-regulation of E-cadherin during gastrulation by regulating E-cadherin protein level downstream from NCK-interacting kinase (NIK) and independently of the regulation of transcription by FGF signaling and Snail. Required for starvation-induced ATG9A trafficking during autophagy. The sequence is that of Transcription factor SPT20 homolog (Supt20h) from Rattus norvegicus (Rat).